We begin with the raw amino-acid sequence, 353 residues long: Protein RecA (353 aa).

68 to 75 lines the ATP pocket; that stretch reads GPESSGKT.

This sequence belongs to the RecA family.

The protein resides in the cytoplasm. Can catalyze the hydrolysis of ATP in the presence of single-stranded DNA, the ATP-dependent uptake of single-stranded DNA by duplex DNA, and the ATP-dependent hybridization of homologous single-stranded DNAs. It interacts with LexA causing its activation and leading to its autocatalytic cleavage. This chain is Protein RecA, found in Roseiflexus sp. (strain RS-1).